An 880-amino-acid polypeptide reads, in one-letter code: DNA polymerase I (880 aa).

In terms of domain architecture, 5'-3' exonuclease spans 174 to 268 (TPEQIIDMKG…SGLEYQGFNR (95 aa)). A 3'-5' exonuclease domain is found at 302 to 470 (DINVKTVTDV…LREKLVQELE (169 aa)).

Belongs to the DNA polymerase type-A family. In terms of assembly, single-chain monomer with multiple functions.

The enzyme catalyses DNA(n) + a 2'-deoxyribonucleoside 5'-triphosphate = DNA(n+1) + diphosphate. In terms of biological role, in addition to polymerase activity, this DNA polymerase exhibits 3'-5' and 5'-3' exonuclease activity. The chain is DNA polymerase I (polA) from Bacillus subtilis (strain 168).